A 108-amino-acid polypeptide reads, in one-letter code: uncharacterized protein (108 aa).

2 stretches are compositionally biased toward basic and acidic residues: residues 1-15 (MSEA…EVLV) and 53-69 (KLKD…RNSE). The disordered stretch occupies residues 1–77 (MSEAKDNGSR…SELDQDEEDK (77 aa)).

This is an uncharacterized protein from Homo sapiens (Human).